We begin with the raw amino-acid sequence, 363 residues long: tRNA(Met) cytidine acetate ligase (363 aa).

Residues 7–20 (IAEY…HKYL), G96, N152, and R175 contribute to the ATP site.

This sequence belongs to the TmcAL family.

The protein localises to the cytoplasm. The enzyme catalyses cytidine(34) in elongator tRNA(Met) + acetate + ATP = N(4)-acetylcytidine(34) in elongator tRNA(Met) + AMP + diphosphate. In terms of biological role, catalyzes the formation of N(4)-acetylcytidine (ac(4)C) at the wobble position of elongator tRNA(Met), using acetate and ATP as substrates. First activates an acetate ion to form acetyladenylate (Ac-AMP) and then transfers the acetyl group to tRNA to form ac(4)C34. This Streptococcus suis (strain 98HAH33) protein is tRNA(Met) cytidine acetate ligase.